The primary structure comprises 360 residues: MPIMAGTASPWRREAVFLTAMLVVETSVVGISTLFKFATSKGLNIYPFLGYSYLLASLLLLPSLFFTNRSSSLPPLSVSILSKIGLLGFLGSMYVITGYIGIEYSSPTLASAINNITPALTFILAIIFRMEKVSFKERSSLAKLMGTILSLIGALVVIFYHGPRVFLASSPPYVNFRQFSPPLSSSNSDWLIGGALLTMQGIFVSVSFILQAHIMSVYPAAFRVSFLYTVCVSIVTSTIGLVVEKNNPSVWIIHFDITLITIVTMAIVTSVYYVIHSWTVRHKGPLYLAIFKPLSILIAVVMGAIFLNDSLYLGCLIGGILITLGFYAVMWGKANEEKDQLSFSEKEKTPLLLNRKNDQV.

A run of 10 helical transmembrane segments spans residues 15 to 35 (AVFL…STLF), 45 to 65 (IYPF…PSLF), 84 to 104 (IGLL…GIEY), 108 to 128 (TLAS…AIIF), 140 to 160 (SLAK…VIFY), 190 to 210 (WLIG…SFIL), 224 to 244 (VSFL…LVVE), 248 to 268 (PSVW…MAIV), 286 to 306 (LYLA…GAIF), and 311 to 331 (LYLG…AVMW). The 129-residue stretch at 30 to 158 (GISTLFKFAT…LSLIGALVVI (129 aa)) folds into the EamA domain.

It belongs to the drug/metabolite transporter (DMT) superfamily. Plant drug/metabolite exporter (P-DME) (TC 2.A.7.4) family.

It is found in the membrane. The polypeptide is WAT1-related protein At3g28070 (Arabidopsis thaliana (Mouse-ear cress)).